A 394-amino-acid polypeptide reads, in one-letter code: 8-amino-7-oxononanoate synthase (394 aa).

Arg21 is a binding site for substrate. Position 112–113 (112–113 (GY)) interacts with pyridoxal 5'-phosphate. His137 lines the substrate pocket. Ser183, His211, and Thr239 together coordinate pyridoxal 5'-phosphate. Lys242 carries the N6-(pyridoxal phosphate)lysine modification. Thr358 serves as a coordination point for substrate.

This sequence belongs to the class-II pyridoxal-phosphate-dependent aminotransferase family. BioF subfamily. As to quaternary structure, homodimer. Pyridoxal 5'-phosphate serves as cofactor.

The enzyme catalyses 6-carboxyhexanoyl-[ACP] + L-alanine + H(+) = (8S)-8-amino-7-oxononanoate + holo-[ACP] + CO2. The protein operates within cofactor biosynthesis; biotin biosynthesis. In terms of biological role, catalyzes the decarboxylative condensation of pimeloyl-[acyl-carrier protein] and L-alanine to produce 8-amino-7-oxononanoate (AON), [acyl-carrier protein], and carbon dioxide. This Paraburkholderia phymatum (strain DSM 17167 / CIP 108236 / LMG 21445 / STM815) (Burkholderia phymatum) protein is 8-amino-7-oxononanoate synthase.